The chain runs to 68 residues: Protein SlyX homolog (68 aa).

This sequence belongs to the SlyX family.

This Pseudomonas fluorescens (strain ATCC BAA-477 / NRRL B-23932 / Pf-5) protein is Protein SlyX homolog.